Here is a 452-residue protein sequence, read N- to C-terminus: Isocitrate dehydrogenase [NADP], mitochondrial (452 aa).

A mitochondrion-targeting transit peptide spans 1–39; it reads MAGYLRVVRSLCRASGSGSAWAPAALTAPNLQEQPRRHY. Residues K45, K48, K67, and K69 each carry the N6-acetyllysine modification. Residues K80 and K106 each carry the N6-acetyllysine; alternate modification. N6-succinyllysine; alternate is present on residues K80 and K106. NADP(+) contacts are provided by residues 115 to 117 and R122; that span reads TIT. T117 provides a ligand contact to D-threo-isocitrate. Residues 134-140 and R149 each bind D-threo-isocitrate; that span reads SPNGTIR. K155 is subject to N6-acetyllysine. Position 166 is an N6-acetyllysine; alternate (K166). An N6-succinyllysine; alternate modification is found at K166. R172 provides a ligand contact to D-threo-isocitrate. N6-acetyllysine; alternate is present on residues K180 and K193. Residues K180 and K193 each carry the N6-succinyllysine; alternate modification. K199 bears the N6-acetyllysine mark. The residue at position 256 (K256) is an N6-acetyllysine; alternate. Position 256 is an N6-succinyllysine; alternate (K256). N6-acetyllysine is present on residues K263, K272, K275, and K280. K282 bears the N6-acetyllysine; alternate mark. K282 is modified (N6-succinyllysine; alternate). D291 is a binding site for Mn(2+). NADP(+) is bound at residue K299. Residue D314 coordinates Mn(2+). Residues 349–354 and N367 contribute to the NADP(+) site; that span reads GTVTRH. K384 is modified (N6-acetyllysine; alternate). The residue at position 384 (K384) is an N6-succinyllysine; alternate. 3 positions are modified to N6-acetyllysine: K400, K413, and K442.

It belongs to the isocitrate and isopropylmalate dehydrogenases family. Homodimer. The cofactor is Mg(2+). It depends on Mn(2+) as a cofactor. Acetylation at Lys-413 dramatically reduces catalytic activity. Deacetylated by SIRT3.

Its subcellular location is the mitochondrion. The enzyme catalyses D-threo-isocitrate + NADP(+) = 2-oxoglutarate + CO2 + NADPH. Functionally, plays a role in intermediary metabolism and energy production. It may tightly associate or interact with the pyruvate dehydrogenase complex. The sequence is that of Isocitrate dehydrogenase [NADP], mitochondrial (IDH2) from Bos taurus (Bovine).